Consider the following 1514-residue polypeptide: MDVLELLRASATGSYTALFSDAWCQYVSKQITNSMYLYCALGVLSMVFLAWFMYFKRLARIRLRDEASRSMSAVNSSSGGDLRGLRFRKRDKMLFYGRRMLRKMKNVSGQMYSSGKGYKRRAVMRFARRILQLRRDNMPLEMRTVEPPAEYLEETIDGSDRVPPDALYMLQSIRIFGHFEKPVFLRLCKHTQLLELMAGDYLFKITDPDDSVYIVQSGMINVYISNADGSTLSLKTVRKGESVTSLLSFIDVLSGNPSYYKTVTAKAIEKSVVIRLPMEAFEEVFQDNPDVMIRVIQVIMIRLQRVLFTALRNYLGLNAELVQNHMRFKSSTIMAPSTHSSQCSRQTGSQPTLGVPAPTCSNTTTTASPTTANTVHSGLAGANGVIGQSRPPISPSRHSREEHTLSDPNPNPDVINTSVGGASGTSMYAEVHGDAPNVDVFHQQQHSVGNLSTRRGSISQMAPDLGPALSQPGLGQGQGLGPGVTGAPPLMTGAPASKIDMRLVHASAVDSLRKELGLPEEDSHIIEPFVEVRELEPNVTLITEGNSDDVCVWFVMTGTLAVYQANQDAARAKQQQEKNDMLIHFVHPGEIVGGLAMLTGEASAYTIRSRNNSRVAFIRRAAIYQIMRQRPRIVLDLGNGVVRRLSPLVRQCDYALDWIFLESGRAVYRQDEISDSTYIVLSGRMRSVITHPGGKKEIIGEYGKGDLVGIVEMITETSRTTTVLAVRDSELAKLPEGLFNAIKLRYPIVVTKLISFLSHRFLGTMQTRSSSAAPGGPVEANPVTHKYSTVALVPITDEVPLTPFTYELYHSLCAIGPVLRLTSDVVRKQLGPNIFEAANEYRLTSWLAQQEDRNIITLYQCDNALSAWTQRCMRQADVILIVGLGNGSHLVGKFEREIDRLAMRTQKELVLLYPETTNSKPANTLSWLNARPWVTKHHHVLCVKRIFTRKSQYRINDLYSRVLLSEPNMHSDFSRLARWLTGNSIGLVLGGGGARGAAHIGMLKAIQEAGIPIDMVGGVSIGALMGALWCSERNITTVTQKAREWSKKMTKWFLQLLDLTYPITSMFSGREFNKTIHDTFGDVSIEDLWIPYFTLTTDITASCHRIHTNGSLWRYVRSSMSLSGYMPPLCDPKDGHLLLDGGYVNNLPGQLWRYCRASMSIAGVFPPFCDYRDGHLLLDGCYTNNVPADVMHNLGAAHIIAIDVGSQDDTDLTNYGDDLSGWWLLYKKWNPFTSPVKVPDLPDIQSRLAYVSCVRQLEEVKNSDYCEYIRPPIDKYKTLAFGSFDEIRDVGYVFGKNYFENMAKAGRLGRFNQWFNKEPPKRGNHASLNEYTFIDLAQIVCRLPETNAGNSADIFSEDEDCDGYISEPTTLNTDRRRIQVPRAGNSLSFSENEMDSDVELDLQLDRKTEKSIHSAATSVARGSMRSREFHKLEQDRSVEITRLKDETERIMAPTNLDRKGDGQEQEKEPEQEQELETEEPNQENTEVEEEQRNQGEGNEDNKENKGGAYNETKN.

Over 1-34 the chain is Lumenal; sequence MDVLELLRASATGSYTALFSDAWCQYVSKQITNS. Residues 35–55 traverse the membrane as a helical segment; that stretch reads MYLYCALGVLSMVFLAWFMYF. Over 56-1514 the chain is Cytoplasmic; that stretch reads KRLARIRLRD…KGGAYNETKN (1459 aa). An a nucleoside 3',5'-cyclic phosphate-binding site is contributed by 175–302; sequence IFGHFEKPVF…IRVIQVIMIR (128 aa). Residues 337-352 are compositionally biased toward polar residues; it reads STHSSQCSRQTGSQPT. Positions 337-418 are disordered; the sequence is STHSSQCSRQ…NPNPDVINTS (82 aa). A compositionally biased stretch (low complexity) spans 356-374; it reads PAPTCSNTTTTASPTTANT. The residue at position 457 (Ser-457) is a Phosphoserine. Residues 515–644 and 633–760 each bind a nucleoside 3',5'-cyclic phosphate; these read ELGL…VVRR and IVLD…LSHR. Residues 987–1153 enclose the PNPLA domain; sequence LVLGGGGARG…VNNLPGQLWR (167 aa). The short motif at 991 to 996 is the GXGXXG element; sequence GGGARG. The GXSXG motif lies at 1018-1022; the sequence is GVSIG. The Nucleophile role is filled by Ser-1020. Asp-1140 functions as the Proton acceptor in the catalytic mechanism. Residues 1140–1142 carry the DGA/G motif; sequence DGG. Phosphoserine is present on Ser-1234. Residues 1409–1514 form a disordered region; the sequence is EKSIHSAATS…KGGAYNETKN (106 aa). 2 stretches are compositionally biased toward basic and acidic residues: residues 1425–1449 and 1456–1470; these read RSREFHKLEQDRSVEITRLKDETER and LDRKGDGQEQEKEPE. Positions 1471–1489 are enriched in acidic residues; that stretch reads QEQELETEEPNQENTEVEE.

It belongs to the NTE family. Interacts with Pka-C3; interaction inhibits the catalytic function of Pka-C3 and the esterase activity of sws.

The protein localises to the endoplasmic reticulum membrane. It carries out the reaction a 1-acyl-sn-glycero-3-phosphocholine + H2O = sn-glycerol 3-phosphocholine + a fatty acid + H(+). In terms of biological role, phospholipase B that deacylates intracellular phosphatidylcholine (PtdCho), generating glycerophosphocholine (GroPtdCho). This deacylation occurs at both sn-2 and sn-1 positions of PtdCho. Its specific chemical modification by certain organophosphorus (OP) compounds leads to distal axonopathy. Plays a role in the signaling mechanism between neurons and glia that regulates glia wrapping during development of the adult brain. Essential for membrane lipid homeostasis and cell survival in both neurons and glia of the adult brain. The sequence is that of Neuropathy target esterase sws from Drosophila ananassae (Fruit fly).